The primary structure comprises 701 residues: Elongation factor G (701 aa).

The region spanning 11–287 (SRVRNFGIMA…AVVDYLPSPL (277 aa)) is the tr-type G domain. GTP contacts are provided by residues 20–27 (AHIDAGKT), 84–88 (DTPGH), and 138–141 (NKMD).

This sequence belongs to the TRAFAC class translation factor GTPase superfamily. Classic translation factor GTPase family. EF-G/EF-2 subfamily.

It localises to the cytoplasm. Functionally, catalyzes the GTP-dependent ribosomal translocation step during translation elongation. During this step, the ribosome changes from the pre-translocational (PRE) to the post-translocational (POST) state as the newly formed A-site-bound peptidyl-tRNA and P-site-bound deacylated tRNA move to the P and E sites, respectively. Catalyzes the coordinated movement of the two tRNA molecules, the mRNA and conformational changes in the ribosome. The chain is Elongation factor G (fusA) from Mycobacterium tuberculosis (strain CDC 1551 / Oshkosh).